The chain runs to 303 residues: Probable WRKY transcription factor 30 (303 aa).

The disordered stretch occupies residues 65–92; the sequence is DQVSQGGGSPKSDDSDQEPLVIKSSKKS. The WRKY DNA-binding region spans 107–175; sequence GVDRTLDDGF…YRGIHSCSQA (69 aa). Over residues 266–278 the composition is skewed to low complexity; it reads SGSASHSASNSPS. The interval 266 to 291 is disordered; the sequence is SGSASHSASNSPSTVPLESPFESYDP.

This sequence belongs to the WRKY group III family. As to quaternary structure, interacts with WRKY53, WRKY54 and WRKY70.

Its subcellular location is the nucleus. In terms of biological role, transcription factor. Interacts specifically with the W box (5'-(T)TGAC[CT]-3'), a frequently occurring elicitor-responsive cis-acting element. This chain is Probable WRKY transcription factor 30, found in Arabidopsis thaliana (Mouse-ear cress).